A 1037-amino-acid polypeptide reads, in one-letter code: Guanine nucleotide-binding protein G(s) subunit alpha isoforms XLas (1037 aa).

4 disordered regions span residues 1-105, 185-224, 283-588, and 640-666; these read MGVR…MPFE, APGG…EETM, SPSQ…TSGC, and PLAE…KKRS. A compositionally biased stretch (low complexity) spans 33-46; that stretch reads APGAAAPGAGPSPA. Basic and acidic residues predominate over residues 343–354; sequence PDKRERAERPPV. 2 stretches are compositionally biased toward low complexity: residues 361 to 408 and 416 to 521; these read MEGA…GATP and APAD…PASG. Basic and acidic residues predominate over residues 553 to 565; the sequence is GKSESSRGRRVYY. A compositionally biased stretch (acidic residues) spans 572–583; it reads SDDDSSGDESDD. The span at 640 to 660 shows a compositional bias: basic and acidic residues; the sequence is PLAEKRRQMRKEALEKRAQKR. Residues 641–667 adopt a coiled-coil conformation; that stretch reads LAEKRRQMRKEALEKRAQKRAEKKRSK. Positions 682-1037 constitute a G-alpha domain; that stretch reads CTHRLLLLGA…RMHLRQYELL (356 aa). The G1 motif stretch occupies residues 685 to 698; sequence RLLLLGAGESGKST. GTP is bound at residue 690 to 698; it reads GAGESGKST. S697 contacts Mg(2+). The interval 711-734 is disordered; the sequence is FNGEGGEEDPQAARSNSDGEKATK. Residues 730–756 are a coiled coil; it reads EKATKVQDIKNNLKEAIETIVAAMSNL. Positions 839 to 847 are G2 motif; it reads DLLRCRVLT. Residues 840–847, 866–870, and 935–938 each bind GTP; these read LLRCRVLT, DVGGQ, and NKQD. R844 carries the post-translational modification ADP-ribosylarginine; by cholera toxin. T847 contacts Mg(2+). The segment at 862 to 871 is G3 motif; that stretch reads FHMFDVGGQR. Residues 931–938 form a G4 motif region; the sequence is ILFLNKQD. S995 bears the Phosphoserine mark. Positions 1007 to 1012 are G5 motif; that stretch reads TCAVDT. A1009 is a binding site for GTP.

Belongs to the G-alpha family. G(s) subfamily. In terms of assembly, g proteins are composed of 3 units; alpha, beta and gamma. The alpha chain contains the guanine nucleotide binding site. Interacts through its N-terminal region with ALEX which is produced from the same locus in a different open reading frame. This interaction may inhibit its adenylyl cyclase-stimulating activity. Interacts with MAGED2.

Its subcellular location is the cell membrane. It is found in the apical cell membrane. It catalyses the reaction GTP + H2O = GDP + phosphate + H(+). Functionally, guanine nucleotide-binding proteins (G proteins) function as transducers in numerous signaling pathways controlled by G protein-coupled receptors (GPCRs). The alpha chain contains the guanine nucleotide binding site and alternates between an active, GTP-bound state and an inactive, GDP-bound state. Signaling by an activated GPCR promotes GDP release and GTP binding. The alpha subunit has a low GTPase activity that converts bound GTP to GDP, thereby terminating the signal. Both GDP release and GTP hydrolysis are modulated by numerous regulatory proteins. Signaling involves the activation of adenylyl cyclases, resulting in increased levels of the signaling molecule cAMP. GNAS functions downstream of several GPCRs, including beta-adrenergic receptors. XLas isoforms interact with the same set of receptors as Gnas isoforms. In Homo sapiens (Human), this protein is Guanine nucleotide-binding protein G(s) subunit alpha isoforms XLas (GNAS).